Reading from the N-terminus, the 129-residue chain is Protein BUNDLE SHEATH DEFECTIVE 2, chloroplastic (129 aa).

The transit peptide at 1-43 directs the protein to the chloroplast; the sequence is MAATASLTTTAPSPPALLKASAPLLISFRPVSRHCKNLCIKTK. The segment at 49–123 adopts a CR-type zinc-finger fold; that stretch reads QSAKKHQKVK…AGFLGGFLST (75 aa). Residues C62, C65, N68, C73, C76, C97, C100, E105, C108, and C111 each coordinate Zn(2+).

The protein belongs to the BSD2 chaperone family. Interacts with the RuBisCo large subunit (RbcL) assembled as an intermediate complex made of eight RbcL and eight BSD2 subunits. As to expression, expressed in shoot tissues, in both bundle sheath and mesophyll cells.

The protein localises to the plastid. It localises to the chloroplast stroma. Its function is as follows. Chloroplast chaperone required for RuBisCo complex biogenesis and translational regulation of the RuBisCo large subunit (RbcL). Stabilizes an end-state assembly intermediate of eight RbcL subunits until the small subunits (RBCSs) become available to produce a complete stable RuBisCo complex containing eight small and eight large subunits. Involved in the differentiation of bundle sheath cells, especially chloroplast structure. The polypeptide is Protein BUNDLE SHEATH DEFECTIVE 2, chloroplastic (Zea mays (Maize)).